We begin with the raw amino-acid sequence, 172 residues long: uncharacterized protein (172 aa).

This sequence belongs to the flavoredoxin family. The cofactor is FMN.

This is an uncharacterized protein from Pyrococcus abyssi (strain GE5 / Orsay).